Here is a 523-residue protein sequence, read N- to C-terminus: Acetyl-coenzyme A carboxylase carboxyl transferase subunit beta, chloroplastic (523 aa).

Residues 224–523 (FWVICENCHK…FVPSNQNSIK (300 aa)) form the CoA carboxyltransferase N-terminal domain. Residues C228, C231, C247, and C250 each coordinate Zn(2+). Residues 228–250 (CENCHKFNYKRLFKSKMNICEEC) form a C4-type zinc finger.

The protein belongs to the AccD/PCCB family. As to quaternary structure, acetyl-CoA carboxylase is a heterohexamer composed of biotin carboxyl carrier protein, biotin carboxylase and 2 subunits each of ACCase subunit alpha and ACCase plastid-coded subunit beta (accD). It depends on Zn(2+) as a cofactor.

It localises to the plastid. It is found in the chloroplast stroma. The catalysed reaction is N(6)-carboxybiotinyl-L-lysyl-[protein] + acetyl-CoA = N(6)-biotinyl-L-lysyl-[protein] + malonyl-CoA. It participates in lipid metabolism; malonyl-CoA biosynthesis; malonyl-CoA from acetyl-CoA: step 1/1. Its function is as follows. Component of the acetyl coenzyme A carboxylase (ACC) complex. Biotin carboxylase (BC) catalyzes the carboxylation of biotin on its carrier protein (BCCP) and then the CO(2) group is transferred by the transcarboxylase to acetyl-CoA to form malonyl-CoA. The chain is Acetyl-coenzyme A carboxylase carboxyl transferase subunit beta, chloroplastic from Cucumis sativus (Cucumber).